Consider the following 847-residue polypeptide: Alanine--tRNA ligase (847 aa).

Histidine 554, histidine 558, cysteine 656, and histidine 660 together coordinate Zn(2+).

The protein belongs to the class-II aminoacyl-tRNA synthetase family. Zn(2+) serves as cofactor.

The protein resides in the cytoplasm. The enzyme catalyses tRNA(Ala) + L-alanine + ATP = L-alanyl-tRNA(Ala) + AMP + diphosphate. Its function is as follows. Catalyzes the attachment of alanine to tRNA(Ala) in a two-step reaction: alanine is first activated by ATP to form Ala-AMP and then transferred to the acceptor end of tRNA(Ala). Also edits incorrectly charged Ser-tRNA(Ala) and Gly-tRNA(Ala) via its editing domain. The chain is Alanine--tRNA ligase from Helicobacter pylori (strain HPAG1).